A 136-amino-acid chain; its full sequence is Ig heavy chain V region XIG8 (136 aa).

The first 18 residues, 1–18 (GFGIFVIFMFFSPSCILS), serve as a signal peptide directing secretion. One can recognise an Ig-like domain in the interval 19 to 128 (QTLQESGPGT…TAGYFEHWGQ (110 aa)).

This chain is Ig heavy chain V region XIG8, found in Xenopus laevis (African clawed frog).